The chain runs to 105 residues: Serine protease inhibitor Kazal-type 6 (105 aa).

Residues 1-23 (MKVAGVFLLLSLALLCFFSGEFS) form the signal peptide. A Pyrrolidone carboxylic acid modification is found at Gln-24. Positions 49–105 (RLFQINCGEFRDPKVFCTRESDPLCGSDGQTYGNKCAFCKALEKSSGKINLKHRGKC) constitute a Kazal-like domain. Cystine bridges form between Cys-55–Cys-87, Cys-65–Cys-84, and Cys-73–Cys-105.

The protein localises to the secreted. In terms of biological role, serine protease inhibitor selective for kallikreins. Efficiently inhibits KLK4, KLK5, KLK6, KLK7, KLK12, KLK13 and KLK14. Doesn't inhibit KLK8. The sequence is that of Serine protease inhibitor Kazal-type 6 (Spink6) from Rattus norvegicus (Rat).